Consider the following 2353-residue polypeptide: Otogelin-like protein (2353 aa).

A signal peptide spans 1–31 (MNIVRKLNLMIPWSIFLLHVLLFSLQEYICA). The VWFD 1 domain occupies 121 to 297 (GICKTWGQYH…VQTPDDTKCV (177 aa)). Disulfide bonds link cysteine 123-cysteine 257 and cysteine 145-cysteine 296. Asparagine 144 carries N-linked (GlcNAc...) asparagine glycosylation. Residues 390–443 (CDDSFVHRDCISCCPPTCTFEKQCLGSNLHCLDGCYCPDGLVMDNGTCISLENC) form the TIL 1 domain. Asparagine 434 and asparagine 473 each carry an N-linked (GlcNAc...) asparagine glycan. The VWFD 2 domain occupies 481–654 (VQCSVVGDSH…NAWRVSSTCF (174 aa)). Cystine bridges form between cysteine 483–cysteine 618, cysteine 505–cysteine 653, and cysteine 527–cysteine 535. Residues 745-800 (CQKGMLYHHCSSFCLHSCISLSSPEQCSDDCAEGCNCPEGKFYEDTLNFCVPIFHC) enclose the TIL 2 domain. 2 N-linked (GlcNAc...) asparagine glycosylation sites follow: asparagine 826 and asparagine 876. The 170-residue stretch at 946–1115 (AVCTIYGDRH…SWALGQCESP (170 aa)) folds into the VWFD 3 domain. Disulfide bonds link cysteine 948/cysteine 1078 and cysteine 992/cysteine 999. Residues asparagine 1289, asparagine 1604, and asparagine 2198 are each glycosylated (N-linked (GlcNAc...) asparagine). The 190-residue stretch at 1534–1723 (CRCSMLSELS…SWEIEKSFEV (190 aa)) folds into the VWFD 4 domain. Cysteine 1536 and cysteine 1683 are disulfide-bonded. Intrachain disulfides connect cysteine 2261–cysteine 2317, cysteine 2282–cysteine 2331, cysteine 2293–cysteine 2348, and cysteine 2297–cysteine 2350. A CTCK domain is found at 2261-2353 (CKREERICQK…EPIDCTCQWN (93 aa)).

Belongs to the otogelin family. As to expression, expressed at high levels in fetal inner ear and heart. Low levels in fetal skeletal muscle, kidney, spleen and colon. Not detected in fetal liver, lung, brain, nor in fetal stomach. In adult tissues, highest levels in brain, kidney, heart and retina. Relatively low levels in lung, spleen and duodenum. Not detected in adult skeletal muscle, liver, nor testis.

Its subcellular location is the secreted. This Homo sapiens (Human) protein is Otogelin-like protein (OTOGL).